Consider the following 75-residue polypeptide: Chaplin-D (75 aa).

The first 23 residues, Met1–Ala23, serve as a signal peptide directing secretion. Residues Ser34 to Asn74 form the Chaplin domain. Cys54 and Cys72 are oxidised to a cystine.

This sequence belongs to the chaplin family. Short chaplin subfamily.

The protein resides in the cell surface. The protein localises to the secreted. It is found in the cell wall. Its subcellular location is the fimbrium. Its function is as follows. One of 8 partially redundant surface-active proteins required for efficient formation of aerial mycelium; the short chaplins assemble into a hydrophobic, amyloidal fibrillar surface layer that envelopes and protects aerial hyphae and spores, presumably anchored to the long chaplins. Chaplins have an overlapping function with the surface-active SapB peptide; chaplins are essential on minimal medium while on rich medium both chaplins and SapB are required for efficient aerial hyphae formation. Chaplins are also involved in cell attachment to a hydrophobic surface. Forms amyloid fibrils in vitro probably composed of stacked beta-sheets, at low extracellular concentrations individually restores the ability to form aerial hyphae to a chaplin-deficient strain. A small chaplin extract (ChpD, ChpE, ChpF, ChpG and ChpH) self-assembles into 2 different amyloids; small fibrils at the air-water interface form an amphipathic membrane that resembles spore-surface structures involved in aerial hyphae formation, and hydrophilic fibrils in solution that resemble the fibers that attach cells to a hydrophobic surface. At the air-water interface the hydrophilic surface is in contact with water (probably equivalent to the peptidoglycan layer), while the hydrophobic face is exposed to the air, making the surface of the aerial hyphae hydrophobic. A minimal chaplin strain capable of forming aerial mycelium/hyphae on minimal medium contains ChpC, ChpE and ChpH. The strain also has restored rodlet formation on the hyphae surface. A second minimal chaplin strain with ChpA, ChpD and ChpE makes slightly less robust hyphae. A small chaplin extract applied to a chaplin-deficient strain restores aerial hyphae formation. The small chaplin extract forms an amyloid-like structure similar to that seen on the surface of cells without rodlets (rdlA-rdlB deletions), and is highly surface active, reducing surface tension from 72 to 26 mJ/m(2), which probably allows escape of hyphae from an aqueous environment into air. The polypeptide is Chaplin-D (Streptomyces coelicolor (strain ATCC BAA-471 / A3(2) / M145)).